A 61-amino-acid chain; its full sequence is Progonadoliberin-1 (61 aa).

Q1 carries the pyrrolidone carboxylic acid modification. At G10 the chain carries Glycine amide.

Belongs to the GnRH family.

Its subcellular location is the secreted. Functionally, stimulates the secretion of gonadotropins; it stimulates the secretion of both luteinizing and follicle-stimulating hormones. In Ovis aries (Sheep), this protein is Progonadoliberin-1 (GNRH1).